Here is a 274-residue protein sequence, read N- to C-terminus: Glutamate--cysteine ligase regulatory subunit (274 aa).

Ser59 carries the phosphoserine modification. At Lys263 the chain carries N6-acetyllysine.

It belongs to the aldo/keto reductase family. Glutamate--cysteine ligase light chain subfamily. In terms of assembly, heterodimer of a catalytic heavy chain and a regulatory light chain.

It functions in the pathway sulfur metabolism; glutathione biosynthesis; glutathione from L-cysteine and L-glutamate: step 1/2. This Mus musculus (Mouse) protein is Glutamate--cysteine ligase regulatory subunit (Gclm).